The sequence spans 384 residues: 8-amino-7-oxononanoate synthase (384 aa).

Arg21 contributes to the substrate binding site. A pyridoxal 5'-phosphate-binding site is contributed by 108–109 (GF). His133 contacts substrate. Positions 179, 207, and 233 each coordinate pyridoxal 5'-phosphate. The residue at position 236 (Lys236) is an N6-(pyridoxal phosphate)lysine. Thr352 serves as a coordination point for substrate.

This sequence belongs to the class-II pyridoxal-phosphate-dependent aminotransferase family. BioF subfamily. Homodimer. Pyridoxal 5'-phosphate is required as a cofactor.

The catalysed reaction is 6-carboxyhexanoyl-[ACP] + L-alanine + H(+) = (8S)-8-amino-7-oxononanoate + holo-[ACP] + CO2. Its pathway is cofactor biosynthesis; biotin biosynthesis. In terms of biological role, catalyzes the decarboxylative condensation of pimeloyl-[acyl-carrier protein] and L-alanine to produce 8-amino-7-oxononanoate (AON), [acyl-carrier protein], and carbon dioxide. This is 8-amino-7-oxononanoate synthase from Escherichia coli O157:H7.